A 258-amino-acid polypeptide reads, in one-letter code: Ribosomal RNA small subunit methyltransferase J (258 aa).

S-adenosyl-L-methionine is bound by residues 123–124 (ER) and aspartate 177. The tract at residues 232–258 (IDGPKPSHSLEGKSSRYDIYPKKALKA) is disordered. Residues 239-252 (HSLEGKSSRYDIYP) show a composition bias toward basic and acidic residues.

Belongs to the methyltransferase superfamily. RsmJ family.

The protein resides in the cytoplasm. It carries out the reaction guanosine(1516) in 16S rRNA + S-adenosyl-L-methionine = N(2)-methylguanosine(1516) in 16S rRNA + S-adenosyl-L-homocysteine + H(+). Functionally, specifically methylates the guanosine in position 1516 of 16S rRNA. This Pseudomonas putida (strain ATCC 47054 / DSM 6125 / CFBP 8728 / NCIMB 11950 / KT2440) protein is Ribosomal RNA small subunit methyltransferase J.